The primary structure comprises 205 residues: Protein GrpE (205 aa).

The tract at residues 172–205 is disordered; sequence KGSTGPGAPAEPAAAPNPYASNGADTGGSFDTKA. Residues 177-195 are compositionally biased toward low complexity; sequence PGAPAEPAAAPNPYASNGA.

The protein belongs to the GrpE family. As to quaternary structure, homodimer.

It localises to the cytoplasm. Participates actively in the response to hyperosmotic and heat shock by preventing the aggregation of stress-denatured proteins, in association with DnaK and GrpE. It is the nucleotide exchange factor for DnaK and may function as a thermosensor. Unfolded proteins bind initially to DnaJ; upon interaction with the DnaJ-bound protein, DnaK hydrolyzes its bound ATP, resulting in the formation of a stable complex. GrpE releases ADP from DnaK; ATP binding to DnaK triggers the release of the substrate protein, thus completing the reaction cycle. Several rounds of ATP-dependent interactions between DnaJ, DnaK and GrpE are required for fully efficient folding. The chain is Protein GrpE from Caulobacter sp. (strain K31).